The chain runs to 118 residues: MRAVYILAMACAATLQASSSALPSTKDLNSQVESLVPSDITDSAHVGGVRLLRVEDKEEETEEERGFGGALADGLKKLNPAKAAKKAKEKAAKIKQDLKEIGEHAAWLEKMRETIGKD.

The N-terminal stretch at 1–21 (MRAVYILAMACAATLQASSSA) is a signal peptide. Residues 50–64 (RLLRVEDKEEETEEE) carry the RxLR-dEER motif.

The protein belongs to the RxLR effector family.

It localises to the secreted. It is found in the host nucleus. Its subcellular location is the host cytoplasm. Effector that enhances P.infestans colonization of Nicotiana benthamiana leaves. This chain is RxLR effector protein PITG_19617, found in Phytophthora infestans (strain T30-4) (Potato late blight agent).